Reading from the N-terminus, the 84-residue chain is uncharacterized protein (84 aa).

The protein belongs to the chlamydial CPn_0711/CT_665/TC_0036 family.

This is an uncharacterized protein from Chlamydia muridarum (strain MoPn / Nigg).